The primary structure comprises 397 residues: LIM/homeobox protein Lhx9 (397 aa).

LIM zinc-binding domains follow at residues 69-130 (ALCA…RFSV) and 131-193 (QRCA…LLQG). Disordered stretches follow at residues 248 to 272 (ENEADHLDRDQQPYPPSQKTKRMRT), 330 to 365 (ENGGVDKADGTSLPAPPSADSGALTPPGTATTLTDL), and 378 to 397 (SNMDSHEPGSPSQTTLTNLF). Residues 267 to 326 (TKRMRTSFKHHQLRTMKSYFAINHNPDAKDLKQLAQKTGLTKRVLQVWFQNARAKFRRNL) constitute a DNA-binding region (homeobox). Residues 353-365 (LTPPGTATTLTDL) show a composition bias toward low complexity. Positions 387 to 397 (SPSQTTLTNLF) are enriched in polar residues.

In terms of assembly, interacts with LDB1 and LDB2. In terms of tissue distribution, expressed in the dorsal thalamus and inner nuclei of the cerebellum.

The protein resides in the nucleus. Involved in gonadal development. The polypeptide is LIM/homeobox protein Lhx9 (Lhx9) (Mus musculus (Mouse)).